The chain runs to 179 residues: UPF0227 protein Ssed_2836 (179 aa).

Belongs to the UPF0227 family.

The chain is UPF0227 protein Ssed_2836 from Shewanella sediminis (strain HAW-EB3).